The sequence spans 412 residues: Phytoene synthase, chloroplastic (412 aa).

The protein belongs to the phytoene/squalene synthase family. Monomer. In terms of tissue distribution, expressed in roots, leaves, flower buds, sepals, petals, lips and lip crests.

It is found in the plastid. It localises to the chloroplast. It catalyses the reaction 2 (2E,6E,10E)-geranylgeranyl diphosphate = 15-cis-phytoene + 2 diphosphate. The protein operates within carotenoid biosynthesis; phytoene biosynthesis; all-trans-phytoene from geranylgeranyl diphosphate: step 1/1. In terms of biological role, catalyzes the reaction from prephytoene diphosphate to phytoene. This chain is Phytoene synthase, chloroplastic (PSY), found in Oncidium hybrid cultivar (Orchid).